The following is a 643-amino-acid chain: Phosphatidylinositol-3,5-bisphosphate 3-phosphatase MTMR2 (643 aa).

The disordered stretch occupies residues 1 to 52; that stretch reads MEKSSSCESLGAQLPAARLPSEDSLSSASTSHSENSVHTKSASAISSDSIST. S6 and S9 each carry phosphoserine. Over residues 23–40 the composition is skewed to polar residues; that stretch reads DSLSSASTSHSENSVHTK. Over residues 41–52 the composition is skewed to low complexity; the sequence is SASAISSDSIST. S58 carries the post-translational modification Phosphoserine. One can recognise a GRAM domain in the interval 68–139; the sequence is NKLAEMEEPA…GVISRVEKIG (72 aa). The region spanning 205–580 is the Myotubularin phosphatase domain; that stretch reads GWKLYDPLLE…RHLELWVGYY (376 aa). Positions 330, 355, and 356 each coordinate a 1,2-diacyl-sn-glycero-3-phospho-(1D-myo-inositol-3,5-bisphosphate). N330, N355, and I356 together coordinate a 1,2-diacyl-sn-glycero-3-phospho-(1D-myo-inositol-3-phosphate). The active-site Phosphocysteine intermediate is the C417. A 1,2-diacyl-sn-glycero-3-phospho-(1D-myo-inositol-3,5-bisphosphate) is bound by residues S418, D419, G420, W421, D422, R423, R459, and R463. S418, D419, G420, W421, D422, and R423 together coordinate a 1,2-diacyl-sn-glycero-3-phospho-(1D-myo-inositol-3-phosphate). A 1,2-diacyl-sn-glycero-3-phospho-(1D-myo-inositol-3-phosphate) is bound at residue R463. A coiled-coil region spans residues 593 to 627; sequence IHSRYKELLAKRAELQRKVEELQREISNRSTSSSE. The disordered stretch occupies residues 614 to 643; that stretch reads LQREISNRSTSSSERASSPAQCVTPVQTVV. Over residues 620-631 the composition is skewed to low complexity; that stretch reads NRSTSSSERASS. A compositionally biased stretch (polar residues) spans 632 to 643; the sequence is PAQCVTPVQTVV.

It belongs to the protein-tyrosine phosphatase family. Non-receptor class myotubularin subfamily. Homodimer (via coiled-coil domain). Heterotetramer consisting of one MTMR2 dimer and one SBF2/MTMR13 dimer; specifically in peripheral nerves stabilizes SBF2/MTMR13 at the membranes and increases MTMR2 catalytic activity towards phosphatidylinositol 3,5-bisphosphate and to a lesser extent towards phosphatidylinositol 3-phosphate. Heterodimer with SBF1/MTMR5; acts as an adapter for the phosphatase MTMR2 to regulate MTMR2 catalytic activity and subcellular location. Heterodimer with MTMR12. In terms of processing, phosphorylation at Ser-58 decreases MTMR2 localization to endocytic vesicular structures. As to expression, expressed in sciatic nerve and in Schwann cells (at protein level). Detected in adult dorsal root ganglia, neurons of the central nervous system, motor neurons, cell soma and neurites of sensory neurons, olfactory bulb, cerebellum and hippocampus.

The protein resides in the cytoplasm. The protein localises to the early endosome membrane. It localises to the perinuclear region. Its subcellular location is the cell projection. It is found in the axon. The protein resides in the endosome membrane. It catalyses the reaction a 1,2-diacyl-sn-glycero-3-phospho-(1D-myo-inositol-3,5-bisphosphate) + H2O = a 1,2-diacyl-sn-glycero-3-phospho-(1D-myo-inositol-5-phosphate) + phosphate. The enzyme catalyses a 1,2-diacyl-sn-glycero-3-phospho-(1D-myo-inositol-3-phosphate) + H2O = a 1,2-diacyl-sn-glycero-3-phospho-(1D-myo-inositol) + phosphate. It carries out the reaction 1,2-dioctanoyl-sn-glycero-3-phospho-(1-D-myo-inositol-3-phosphate) + H2O = 1,2-dioctanoyl-sn-glycero-3-phospho-(1D-myo-inositol) + phosphate. The catalysed reaction is 1,2-dioctanoyl-sn-glycero-3-phospho-(1D-myo-inositol-3,5-bisphosphate) + H2O = 1,2-dioctanoyl-sn-glycero-3-phospho-(1D-myo-inositol-5-phosphate) + phosphate. Its function is as follows. Lipid phosphatase that specifically dephosphorylates the D-3 position of phosphatidylinositol 3-phosphate and phosphatidylinositol 3,5-bisphosphate, generating phosphatidylinositol and phosphatidylinositol 5-phosphate. Regulates the level of these phosphoinositides critical for various biological processes including autophagy initiation and autophagosome maturation. The polypeptide is Phosphatidylinositol-3,5-bisphosphate 3-phosphatase MTMR2 (Mus musculus (Mouse)).